A 150-amino-acid polypeptide reads, in one-letter code: uncharacterized protein (150 aa).

Its subcellular location is the plastid. It is found in the chloroplast. This is an uncharacterized protein from Pyropia yezoensis (Susabi-nori).